The primary structure comprises 307 residues: MLQQRTIKTLTRAVGVGLHSGQRVELTLRPAQPDTGIVFRRVDLPEPVDIPITATAVVDTRMASTIGAGGAKVHTVEHLMSACAGLGLDNLYIDITAEEVPILDGSSASFVFLLQSAGVELQNAPKRFIRVKRPVEVREGTGQQLKWARLEPYHGFKLRFDIDFAHPAVDSTGQSAEFDLGEGNYARDIARARTFGFTKDVEMLRSSGLALGGGLDNAIVMDDYKVLNADSLRYDAEFARHKILDAMGDLYLVGKPLLAAYSAFRSGHAMNNLLLRELLAHEDAWEIVTFENERQAPAGFTQPVRAW.

Zn(2+) contacts are provided by H78, H241, and D245. The active-site Proton donor is the H268.

Belongs to the LpxC family. Zn(2+) serves as cofactor.

The catalysed reaction is a UDP-3-O-[(3R)-3-hydroxyacyl]-N-acetyl-alpha-D-glucosamine + H2O = a UDP-3-O-[(3R)-3-hydroxyacyl]-alpha-D-glucosamine + acetate. It participates in glycolipid biosynthesis; lipid IV(A) biosynthesis; lipid IV(A) from (3R)-3-hydroxytetradecanoyl-[acyl-carrier-protein] and UDP-N-acetyl-alpha-D-glucosamine: step 2/6. Catalyzes the hydrolysis of UDP-3-O-myristoyl-N-acetylglucosamine to form UDP-3-O-myristoylglucosamine and acetate, the committed step in lipid A biosynthesis. In Acidovorax sp. (strain JS42), this protein is UDP-3-O-acyl-N-acetylglucosamine deacetylase.